The sequence spans 838 residues: Protein translocase subunit SecA (838 aa).

ATP is bound by residues Q87, 105-109 (GEGKT), and D494. Composition is skewed to basic and acidic residues over residues 781–790 (EQEFQHKDET) and 803–819 (EDAKKEPKRREAPKVGR). The interval 781-838 (EQEFQHKDETANVQYSGPAESAEDAKKEPKRREAPKVGRNDPCPCGSGKKYKKCHGAK) is disordered. Zn(2+)-binding residues include C823, C825, C834, and H835. Residues 829-838 (KKYKKCHGAK) are compositionally biased toward basic residues.

The protein belongs to the SecA family. Monomer and homodimer. Part of the essential Sec protein translocation apparatus which comprises SecA, SecYEG and auxiliary proteins SecDF-YajC and YidC. Requires Zn(2+) as cofactor.

It localises to the cell inner membrane. The protein localises to the cytoplasm. It carries out the reaction ATP + H2O + cellular proteinSide 1 = ADP + phosphate + cellular proteinSide 2.. In terms of biological role, part of the Sec protein translocase complex. Interacts with the SecYEG preprotein conducting channel. Has a central role in coupling the hydrolysis of ATP to the transfer of proteins into and across the cell membrane, serving as an ATP-driven molecular motor driving the stepwise translocation of polypeptide chains across the membrane. This is Protein translocase subunit SecA from Solidesulfovibrio magneticus (strain ATCC 700980 / DSM 13731 / RS-1) (Desulfovibrio magneticus).